Reading from the N-terminus, the 508-residue chain is GMP synthase [glutamine-hydrolyzing] (508 aa).

The region spanning 1 to 189 is the Glutamine amidotransferase type-1 domain; sequence MIVVLDFGSQ…ALLVCGCEKT (189 aa). Cysteine 78 (nucleophile) is an active-site residue. Active-site residues include histidine 163 and glutamate 165. Positions 190-383 constitute a GMPS ATP-PPase domain; that stretch reads WGMQNFAQKE…LGVSQDFLMR (194 aa). ATP is bound at residue 217 to 223; sequence SGGVDST.

As to quaternary structure, homodimer.

It catalyses the reaction XMP + L-glutamine + ATP + H2O = GMP + L-glutamate + AMP + diphosphate + 2 H(+). It functions in the pathway purine metabolism; GMP biosynthesis; GMP from XMP (L-Gln route): step 1/1. Functionally, catalyzes the synthesis of GMP from XMP. The sequence is that of GMP synthase [glutamine-hydrolyzing] from Helicobacter acinonychis (strain Sheeba).